Reading from the N-terminus, the 222-residue chain is Deoxyribose-phosphate aldolase (222 aa).

Aspartate 93 (proton donor/acceptor) is an active-site residue. Residue lysine 156 is the Schiff-base intermediate with acetaldehyde of the active site. Catalysis depends on lysine 186, which acts as the Proton donor/acceptor.

The protein belongs to the DeoC/FbaB aldolase family. DeoC type 1 subfamily.

Its subcellular location is the cytoplasm. The enzyme catalyses 2-deoxy-D-ribose 5-phosphate = D-glyceraldehyde 3-phosphate + acetaldehyde. It participates in carbohydrate degradation; 2-deoxy-D-ribose 1-phosphate degradation; D-glyceraldehyde 3-phosphate and acetaldehyde from 2-deoxy-alpha-D-ribose 1-phosphate: step 2/2. Functionally, catalyzes a reversible aldol reaction between acetaldehyde and D-glyceraldehyde 3-phosphate to generate 2-deoxy-D-ribose 5-phosphate. The protein is Deoxyribose-phosphate aldolase of Corynebacterium glutamicum (strain ATCC 13032 / DSM 20300 / JCM 1318 / BCRC 11384 / CCUG 27702 / LMG 3730 / NBRC 12168 / NCIMB 10025 / NRRL B-2784 / 534).